A 227-amino-acid chain; its full sequence is Cytochrome c oxidase subunit 2 (227 aa).

The Mitochondrial intermembrane portion of the chain corresponds to 1 to 14; sequence MAYPFQLGLQDATS. A helical transmembrane segment spans residues 15–45; the sequence is PIMEELLHFHDHTLMIVFLISSLVLYIISLM. At 46–59 the chain is on the mitochondrial matrix side; the sequence is LTTKLTHTSTMDAQ. The helical transmembrane segment at 60 to 87 threads the bilayer; sequence EVETVWTILPAIILILIALPSLRILYMM. At 88–227 the chain is on the mitochondrial intermembrane side; the sequence is DEINNPSLTV…YFETWSAVMV (140 aa). Cu cation contacts are provided by His-161, Cys-196, Glu-198, Cys-200, His-204, and Met-207. Glu-198 lines the Mg(2+) pocket. Tyr-218 bears the Phosphotyrosine mark.

It belongs to the cytochrome c oxidase subunit 2 family. In terms of assembly, component of the cytochrome c oxidase (complex IV, CIV), a multisubunit enzyme composed of 14 subunits. The complex is composed of a catalytic core of 3 subunits MT-CO1, MT-CO2 and MT-CO3, encoded in the mitochondrial DNA, and 11 supernumerary subunits COX4I, COX5A, COX5B, COX6A, COX6B, COX6C, COX7A, COX7B, COX7C, COX8 and NDUFA4, which are encoded in the nuclear genome. The complex exists as a monomer or a dimer and forms supercomplexes (SCs) in the inner mitochondrial membrane with NADH-ubiquinone oxidoreductase (complex I, CI) and ubiquinol-cytochrome c oxidoreductase (cytochrome b-c1 complex, complex III, CIII), resulting in different assemblies (supercomplex SCI(1)III(2)IV(1) and megacomplex MCI(2)III(2)IV(2)). Found in a complex with TMEM177, COA6, COX18, COX20, SCO1 and SCO2. Interacts with TMEM177 in a COX20-dependent manner. Interacts with COX20. Interacts with COX16. Cu cation serves as cofactor.

Its subcellular location is the mitochondrion inner membrane. The enzyme catalyses 4 Fe(II)-[cytochrome c] + O2 + 8 H(+)(in) = 4 Fe(III)-[cytochrome c] + 2 H2O + 4 H(+)(out). Component of the cytochrome c oxidase, the last enzyme in the mitochondrial electron transport chain which drives oxidative phosphorylation. The respiratory chain contains 3 multisubunit complexes succinate dehydrogenase (complex II, CII), ubiquinol-cytochrome c oxidoreductase (cytochrome b-c1 complex, complex III, CIII) and cytochrome c oxidase (complex IV, CIV), that cooperate to transfer electrons derived from NADH and succinate to molecular oxygen, creating an electrochemical gradient over the inner membrane that drives transmembrane transport and the ATP synthase. Cytochrome c oxidase is the component of the respiratory chain that catalyzes the reduction of oxygen to water. Electrons originating from reduced cytochrome c in the intermembrane space (IMS) are transferred via the dinuclear copper A center (CU(A)) of subunit 2 and heme A of subunit 1 to the active site in subunit 1, a binuclear center (BNC) formed by heme A3 and copper B (CU(B)). The BNC reduces molecular oxygen to 2 water molecules using 4 electrons from cytochrome c in the IMS and 4 protons from the mitochondrial matrix. This is Cytochrome c oxidase subunit 2 (MT-CO2) from Lycalopex vetulus (Hoary fox).